Reading from the N-terminus, the 155-residue chain is MEQGSLAKKVSQFVEPTIESMGLTLWGVEVTSANRPAVIIYIDSENGVSIDQCAEVSRDVGLMLEVEEVIDSAYVLEVSSPGLERKFFKPEQMSAYVGKKIDIALVFSLEGRKKFKGLLQETDEEGLLLKLEDQEDPIKIEWDRIKKAKLIHEFK.

Belongs to the RimP family.

It is found in the cytoplasm. In terms of biological role, required for maturation of 30S ribosomal subunits. The polypeptide is Ribosome maturation factor RimP (Maridesulfovibrio salexigens (strain ATCC 14822 / DSM 2638 / NCIMB 8403 / VKM B-1763) (Desulfovibrio salexigens)).